A 244-amino-acid polypeptide reads, in one-letter code: Cobalt transport protein CbiM (244 aa).

A signal peptide spans 1–27 (MVEGMLKTNFRLLFLLIFLLIPTPVLA). Helical transmembrane passes span 36–56 (PVKW…VGFI), 65–85 (GPGA…LSAL), 102–122 (LAAI…VLIF), 134–154 (TLGA…YGVY), 168–188 (IFLA…VQLA), and 196–216 (LFLS…PLAI).

This sequence belongs to the CbiM family. Forms an energy-coupling factor (ECF) transporter complex composed of an ATP-binding protein (A component, CbiO), a transmembrane protein (T component, CbiQ) and 2 possible substrate-capture proteins (S components, CbiM and CbiN) of unknown stoichimetry.

It localises to the cell membrane. It functions in the pathway cofactor biosynthesis; adenosylcobalamin biosynthesis. Functionally, part of the energy-coupling factor (ECF) transporter complex CbiMNOQ involved in cobalt import. The protein is Cobalt transport protein CbiM of Carboxydothermus hydrogenoformans (strain ATCC BAA-161 / DSM 6008 / Z-2901).